Reading from the N-terminus, the 304-residue chain is MPQQLSPINIETKKAISDARLKTLDIHYNESKPTTIQNTGKLVRINFKGGYISGGFLPNEYVLSTIHIYWGKEDDYGSNHLIDVYKYSGEINLVHWNKKKYSSYEEAKKHDDGIIIIAIFLQVSDHKNVYFQKIVNQLDSIRSANMSAPFDSVFYLDNLLPSTLDYFTYLGTTINHSADAAWIIFPTPINIHSDQLSKFRTLLSSSNHEGKPHYITENYRNPYKLNDDTQVYYSGEIIRAATTSPVRENYFMKWLSDLREACFSYYQKYIEGNKTFAIIAIVFVFILTAILFLMSQRYSREKQN.

This sequence belongs to the alpha-carbonic anhydrase family. Homodimer; disulfide-linked. Apparently non-glycosylated.

Its subcellular location is the virion membrane. Its function is as follows. Binds to chondroitin sulfate on the cell surface to provide virion attachment to target cell. The chain is Cell surface-binding protein OPG105 (OPG105) from Monkeypox virus.